A 229-amino-acid polypeptide reads, in one-letter code: 7-cyano-7-deazaguanine synthase (229 aa).

9–19 (YSGGLDSTTCM) is a binding site for ATP. Zn(2+) contacts are provided by cysteine 189, cysteine 199, cysteine 202, and cysteine 205.

This sequence belongs to the QueC family. It depends on Zn(2+) as a cofactor.

It carries out the reaction 7-carboxy-7-deazaguanine + NH4(+) + ATP = 7-cyano-7-deazaguanine + ADP + phosphate + H2O + H(+). The protein operates within purine metabolism; 7-cyano-7-deazaguanine biosynthesis. In terms of biological role, catalyzes the ATP-dependent conversion of 7-carboxy-7-deazaguanine (CDG) to 7-cyano-7-deazaguanine (preQ(0)). This Geotalea daltonii (strain DSM 22248 / JCM 15807 / FRC-32) (Geobacter daltonii) protein is 7-cyano-7-deazaguanine synthase.